The following is a 469-amino-acid chain: 3-isopropylmalate dehydratase large subunit (469 aa).

[4Fe-4S] cluster-binding residues include Cys349, Cys410, and Cys413.

Belongs to the aconitase/IPM isomerase family. LeuC type 1 subfamily. Heterodimer of LeuC and LeuD. [4Fe-4S] cluster serves as cofactor.

The enzyme catalyses (2R,3S)-3-isopropylmalate = (2S)-2-isopropylmalate. The protein operates within amino-acid biosynthesis; L-leucine biosynthesis; L-leucine from 3-methyl-2-oxobutanoate: step 2/4. Catalyzes the isomerization between 2-isopropylmalate and 3-isopropylmalate, via the formation of 2-isopropylmaleate. This is 3-isopropylmalate dehydratase large subunit from Neisseria gonorrhoeae (strain ATCC 700825 / FA 1090).